Reading from the N-terminus, the 467-residue chain is Acetyl-CoA decarbonylase/synthase complex subunit beta (467 aa).

Residues Cys-193, Cys-196, Cys-282, and Cys-284 each coordinate [Ni-Fe-S] cluster. Positions 403 to 428 (RWAEEEEEEEEKAPEEEAPAEEPTME) are disordered. Positions 405–426 (AEEEEEEEEKAPEEEAPAEEPT) are enriched in acidic residues.

This sequence belongs to the CdhC family. Monomer. The ACDS complex is made up of alpha, epsilon, beta, gamma and delta chains with a probable stoichiometry of (alpha(2)epsilon(2))(4)-beta(8)-(gamma(1)delta(1))(8). Requires [Ni-Fe-S] cluster as cofactor.

It carries out the reaction Co(I)-[corrinoid Fe-S protein] + acetyl-CoA + H(+) = methyl-Co(III)-[corrinoid Fe-S protein] + CO + CoA. Its function is as follows. Part of a complex that catalyzes the reversible cleavage of acetyl-CoA, allowing autotrophic growth from CO(2). The alpha-epsilon complex generates CO from CO(2), while the beta subunit (this protein) combines the CO with CoA and a methyl group to form acetyl-CoA. The methyl group, which is incorporated into acetyl-CoA, is transferred to the beta subunit by a corrinoid iron-sulfur protein (the gamma-delta complex). This Methanopyrus kandleri (strain AV19 / DSM 6324 / JCM 9639 / NBRC 100938) protein is Acetyl-CoA decarbonylase/synthase complex subunit beta.